A 154-amino-acid polypeptide reads, in one-letter code: Myoglobin (154 aa).

Residues 2–148 (GLSDGEWQLV…FRNDIAAKYK (147 aa)) enclose the Globin domain. Serine 4 is subject to Phosphoserine. Histidine 65 provides a ligand contact to nitrite. Position 65 (histidine 65) interacts with O2. Threonine 68 carries the post-translational modification Phosphothreonine. Heme b is bound at residue histidine 94.

The protein belongs to the globin family. As to quaternary structure, monomeric.

The protein localises to the cytoplasm. It is found in the sarcoplasm. It carries out the reaction Fe(III)-heme b-[protein] + nitric oxide + H2O = Fe(II)-heme b-[protein] + nitrite + 2 H(+). It catalyses the reaction H2O2 + AH2 = A + 2 H2O. Monomeric heme protein which primary function is to store oxygen and facilitate its diffusion within muscle tissues. Reversibly binds oxygen through a pentacoordinated heme iron and enables its timely and efficient release as needed during periods of heightened demand. Depending on the oxidative conditions of tissues and cells, and in addition to its ability to bind oxygen, it also has a nitrite reductase activity whereby it regulates the production of bioactive nitric oxide. Under stress conditions, like hypoxia and anoxia, it also protects cells against reactive oxygen species thanks to its pseudoperoxidase activity. The polypeptide is Myoglobin (MB) (Ctenodactylus gundi (Northern gundi)).